A 1578-amino-acid polypeptide reads, in one-letter code: Chitinase ChiA (1578 aa).

Residues 1–19 (MKHYYRLLFLLLFPLLASA) form the signal peptide. A GH18 1 domain is found at 25 to 466 (KKVVGYYAQW…NQVDTSFGSV (442 aa)). Positions 26 to 446 (KVVGYYAQWS…GGMIWELSQD (421 aa)) are GH18N. Chitin contacts are provided by residues 92–93 (DA) and 119–122 (GGWT). E162 functions as the Proton donor in the catalytic mechanism. Chitin is bound by residues Y163, 249–252 (FGYD), and W441. Residues 485–536 (TDVTVELRNASNAVIQTVVSANGNFAFNNLTSGQNYSLTALKATYTFTPVTL) form the CNA-B domain. Residues 1142-1462 (KIILGYAHSW…GLMTWSVNWD (321 aa)) form a GH18C region. Residues 1142 to 1483 (KIILGYAHSW…KAYAAYFASQ (342 aa)) form the GH18 2 domain. E1264 functions as the Proton donor in the catalytic mechanism. The interval 1473–1578 (SKAYAAYFAS…KSFKVMNFLN (106 aa)) is CTD.

Belongs to the glycosyl hydrolase 18 family. Chitinase class II subfamily.

The protein localises to the secreted. It carries out the reaction Random endo-hydrolysis of N-acetyl-beta-D-glucosaminide (1-&gt;4)-beta-linkages in chitin and chitodextrins.. Its function is as follows. Major extracellular chitinase, which is essential for chitin utilization. This Flavobacterium johnsoniae (strain ATCC 17061 / DSM 2064 / JCM 8514 / BCRC 14874 / CCUG 350202 / NBRC 14942 / NCIMB 11054 / UW101) (Cytophaga johnsonae) protein is Chitinase ChiA (chiA).